Here is a 309-residue protein sequence, read N- to C-terminus: Sodium/potassium-transporting ATPase subunit beta-1 (309 aa).

Topologically, residues methionine 1 to serine 45 are cytoplasmic. A helical; Signal-anchor for type II membrane protein membrane pass occupies residues glutamine 46 to methionine 66. The Extracellular segment spans residues glutamine 67–aspartate 309. The N-linked (GlcNAc...) asparagine glycan is linked to asparagine 133. Disulfide bonds link cysteine 143-cysteine 155 and cysteine 165-cysteine 179. A glycan (N-linked (GlcNAc...) asparagine) is linked at asparagine 211. The cysteines at positions 225 and 282 are disulfide-linked.

It belongs to the X(+)/potassium ATPases subunit beta family. As to quaternary structure, the sodium/potassium-transporting ATPase is composed of a catalytic alpha subunit, an auxiliary non-catalytic beta subunit and an additional regulatory subunit. Interacts with nkain. As to expression, in embryos, it is expressed in the neurons of the CNS and PNS, in Garland cells and posterior spiracles. In adults, it is concentrated in the thorax and abdomen (muscle tissue, digestive system and Malpighian tubules) and weakly expressed in the head. Expression is diffuse in the nervous system.

Its subcellular location is the cell membrane. Its function is as follows. This is the non-catalytic component of the active enzyme, which catalyzes the hydrolysis of ATP coupled with the exchange of Na(+) and K(+) ions across the plasma membrane. The beta subunit regulates, through assembly of alpha/beta heterodimers, the number of sodium pumps transported to the plasma membrane. The sequence is that of Sodium/potassium-transporting ATPase subunit beta-1 (nrv1) from Drosophila melanogaster (Fruit fly).